The chain runs to 308 residues: Ribosomal RNA large subunit methyltransferase F (308 aa).

Belongs to the methyltransferase superfamily. METTL16/RlmF family.

It is found in the cytoplasm. It catalyses the reaction adenosine(1618) in 23S rRNA + S-adenosyl-L-methionine = N(6)-methyladenosine(1618) in 23S rRNA + S-adenosyl-L-homocysteine + H(+). Its function is as follows. Specifically methylates the adenine in position 1618 of 23S rRNA. This is Ribosomal RNA large subunit methyltransferase F from Salmonella schwarzengrund (strain CVM19633).